The following is a 593-amino-acid chain: Probable 5'-nucleotidase (593 aa).

A signal peptide spans 1–21 (MKRFIPHRVIHAVCIGLALVG). C22 carries N-palmitoyl cysteine lipidation. C22 carries S-diacylglycerol cysteine lipidation. A divalent metal cation contacts are provided by D41, H43, D91, N123, and H224. Residues F456 and 539-545 (YIARGKD) contribute to the substrate site.

It belongs to the 5'-nucleotidase family. The cofactor is a divalent metal cation.

Its subcellular location is the cell membrane. The enzyme catalyses a ribonucleoside 5'-phosphate + H2O = a ribonucleoside + phosphate. The chain is Probable 5'-nucleotidase from Treponema pallidum (strain Nichols).